Reading from the N-terminus, the 110-residue chain is UPF0060 membrane protein PBPRB0495 (110 aa).

The next 4 membrane-spanning stretches (helical) occupy residues 7–27, 33–53, 63–83, and 85–105; these read VGLF…PYLW, TIWL…LLTL, AAYG…VDGI, and PTVW…IIMF.

It belongs to the UPF0060 family.

The protein resides in the cell inner membrane. The polypeptide is UPF0060 membrane protein PBPRB0495 (Photobacterium profundum (strain SS9)).